Reading from the N-terminus, the 299-residue chain is Regucalcin (299 aa).

Position 18 (glutamate 18) interacts with a divalent metal cation. The substrate site is built by arginine 101, asparagine 103, and glutamate 121. Residues asparagine 154 and aspartate 204 each contribute to the a divalent metal cation site. The active-site Proton donor/acceptor is the aspartate 204. N6-succinyllysine is present on residues lysine 244 and lysine 253.

The protein belongs to the SMP-30/CGR1 family. Monomer. Zn(2+) serves as cofactor. Mn(2+) is required as a cofactor. Requires Ca(2+) as cofactor. The cofactor is Mg(2+).

The protein resides in the cytoplasm. It catalyses the reaction D-glucono-1,5-lactone + H2O = D-gluconate + H(+). It functions in the pathway cofactor biosynthesis; L-ascorbate biosynthesis via UDP-alpha-D-glucuronate pathway; L-ascorbate from UDP-alpha-D-glucuronate: step 3/4. Its function is as follows. Gluconolactonase with low activity towards other sugar lactones, including gulonolactone and galactonolactone. Catalyzes a key step in ascorbic acid (vitamin C) biosynthesis. Can also hydrolyze diisopropyl phosphorofluoridate and phenylacetate (in vitro). Calcium-binding protein. Modulates Ca(2+) signaling, and Ca(2+)-dependent cellular processes and enzyme activities. This Sus scrofa (Pig) protein is Regucalcin (RGN).